Consider the following 520-residue polypeptide: Probable bifunctional tRNA threonylcarbamoyladenosine biosynthesis protein (520 aa).

The interval 1–318 is kae1; it reads MKIGPVLGIE…YRADQVLVTW (318 aa). Positions 105, 109, and 126 each coordinate Fe cation. Residues 126–130, Asp-158, Gly-171, Glu-175, and Asn-251 each bind L-threonylcarbamoyladenylate; that span reads YASGA. Residue Asp-279 coordinates Fe cation. Residues 327–520 enclose the Protein kinase domain; that stretch reads RHPDAYSARG…HEIELRGRYL (194 aa). ATP-binding positions include 333–341 and Lys-350; that span reads SARGAEAIV. Asp-437 acts as the Proton acceptor; for kinase activity in catalysis.

The protein in the N-terminal section; belongs to the KAE1 / TsaD family. In the C-terminal section; belongs to the protein kinase superfamily. Tyr protein kinase family. BUD32 subfamily. As to quaternary structure, component of the KEOPS complex that consists of Kae1, Bud32, Cgi121 and Pcc1; the whole complex dimerizes. It depends on Fe(2+) as a cofactor.

The protein localises to the cytoplasm. The enzyme catalyses L-seryl-[protein] + ATP = O-phospho-L-seryl-[protein] + ADP + H(+). It carries out the reaction L-threonyl-[protein] + ATP = O-phospho-L-threonyl-[protein] + ADP + H(+). The catalysed reaction is L-threonylcarbamoyladenylate + adenosine(37) in tRNA = N(6)-L-threonylcarbamoyladenosine(37) in tRNA + AMP + H(+). In terms of biological role, required for the formation of a threonylcarbamoyl group on adenosine at position 37 (t(6)A37) in tRNAs that read codons beginning with adenine. Is a component of the KEOPS complex that is probably involved in the transfer of the threonylcarbamoyl moiety of threonylcarbamoyl-AMP (TC-AMP) to the N6 group of A37. The Kae1 domain likely plays a direct catalytic role in this reaction. The Bud32 domain probably displays kinase activity that regulates Kae1 function. The protein is Probable bifunctional tRNA threonylcarbamoyladenosine biosynthesis protein of Methanospirillum hungatei JF-1 (strain ATCC 27890 / DSM 864 / NBRC 100397 / JF-1).